The primary structure comprises 3601 residues: Protein SPIRRIG (3601 aa).

Disordered regions lie at residues 17–50 (AQSSDSDPFPVDLTAPPSSSSSSSSPSFTYPSSS), 398–426 (SSNHDSGSDDPEVFHDGENTNSTENADFS), 449–476 (PAEPSVGRASRSSQTKPTGHSRSRTSSV), 638–657 (QYSGVSSHSDRKPSSGSFRK), 1954–1993 (HINDADDSGSQGSLPHDQDQSTKTSISVGSFPQGQVSLGS), 2009–2049 (ENIL…DFQD), and 2715–2747 (TTHVKSETGSPRHSSSAKMDETNGREEKSEKEL). Positions 32 to 50 (PPSSSSSSSSPSFTYPSSS) are enriched in low complexity. 2 stretches are compositionally biased toward polar residues: residues 416–426 (NTNSTENADFS) and 458–476 (SRSSQTKPTGHSRSRTSSV). The span at 1974-1991 (STKTSISVGSFPQGQVSL) shows a compositional bias: polar residues. Over residues 2027–2048 (EDVKKQDDHHVGPSASSERDFQ) the composition is skewed to basic and acidic residues. Positions 2715 to 2731 (TTHVKSETGSPRHSSSA) are enriched in polar residues. Over residues 2732 to 2747 (KMDETNGREEKSEKEL) the composition is skewed to basic and acidic residues. The 168-residue stretch at 2760–2927 (EHLEKIRFRY…EREEVFKNLV (168 aa)) folds into the BEACH-type PH domain. The BEACH domain occupies 2952-3244 (GGRLFKLMAK…QLFPKAHVKR (293 aa)). 4 WD repeats span residues 3328 to 3367 (HESNQIQCAGVSHDGRIVVTGAEDGLVCVWRVSKDGPRGS), 3378 to 3417 (AHTAKVTCLRVSQPYMMIASGSDDCTVIIWDLSSLSFVRQ), 3464 to 3507 (PSDS…DPVS), and 3540 to 3579 (FHKQPVTALHLTSDLKQLLSGDSAGQLLSWTVPDETLRAS).

As to quaternary structure, interacts with DCP1. Expressed in flowers, leaves, stems, hypocotyls and roots.

Its subcellular location is the cytoplasm. It is found in the P-body. Functionally, involved in cell morphogenesis. May have a function in membrane fusion or membrane composition. Required for salt stress tolerance. Regulates the salt stress-dependent post-transcriptional stabilization, cytoplasmic agglomeration, and localization to P-bodies of a subset of salt stress-regulated mRNAs. The protein is Protein SPIRRIG of Arabidopsis thaliana (Mouse-ear cress).